Here is a 284-residue protein sequence, read N- to C-terminus: Homeobox protein Hox-D13 (284 aa).

Positions 217–276 (GRKKRVPYTKTQLKELEREYATNKFITKEKRRRISTATNLTERQVTIWFQNRRVKEKKVV) form a DNA-binding region, homeobox.

It belongs to the Abd-B homeobox family.

The protein localises to the nucleus. Its function is as follows. Sequence-specific transcription factor that binds gene promoters and activates their transcription. Part of a developmental regulatory system that provides cells with specific positional identities on the anterior-posterior axis. This is Homeobox protein Hox-D13 (HOXD13) from Heterodontus francisci (Horn shark).